The following is a 425-amino-acid chain: Serine--tRNA ligase (425 aa).

230-232 (TSE) is an L-serine binding site. 261 to 263 (RKE) is an ATP binding site. An L-serine-binding site is contributed by Glu284. Residue 348 to 351 (EISS) coordinates ATP. Ser385 lines the L-serine pocket.

This sequence belongs to the class-II aminoacyl-tRNA synthetase family. Type-1 seryl-tRNA synthetase subfamily. As to quaternary structure, homodimer. The tRNA molecule binds across the dimer.

It localises to the cytoplasm. The enzyme catalyses tRNA(Ser) + L-serine + ATP = L-seryl-tRNA(Ser) + AMP + diphosphate + H(+). The catalysed reaction is tRNA(Sec) + L-serine + ATP = L-seryl-tRNA(Sec) + AMP + diphosphate + H(+). The protein operates within aminoacyl-tRNA biosynthesis; selenocysteinyl-tRNA(Sec) biosynthesis; L-seryl-tRNA(Sec) from L-serine and tRNA(Sec): step 1/1. In terms of biological role, catalyzes the attachment of serine to tRNA(Ser). Is also able to aminoacylate tRNA(Sec) with serine, to form the misacylated tRNA L-seryl-tRNA(Sec), which will be further converted into selenocysteinyl-tRNA(Sec). The protein is Serine--tRNA ligase of Wolbachia pipientis wMel.